Here is a 191-residue protein sequence, read N- to C-terminus: Large ribosomal subunit protein bL25 (191 aa).

Belongs to the bacterial ribosomal protein bL25 family. CTC subfamily. Part of the 50S ribosomal subunit; part of the 5S rRNA/L5/L18/L25 subcomplex. Contacts the 5S rRNA. Binds to the 5S rRNA independently of L5 and L18.

Functionally, this is one of the proteins that binds to the 5S RNA in the ribosome where it forms part of the central protuberance. The protein is Large ribosomal subunit protein bL25 of Nitratidesulfovibrio vulgaris (strain DSM 19637 / Miyazaki F) (Desulfovibrio vulgaris).